A 366-amino-acid chain; its full sequence is Ribosomal RNA large subunit methyltransferase M (366 aa).

S-adenosyl-L-methionine is bound by residues Ser-188, 221–224 (CPGG), Asp-240, Asp-260, and Asp-277. Lys-306 functions as the Proton acceptor in the catalytic mechanism.

Belongs to the class I-like SAM-binding methyltransferase superfamily. RNA methyltransferase RlmE family. RlmM subfamily. Monomer.

It is found in the cytoplasm. It carries out the reaction cytidine(2498) in 23S rRNA + S-adenosyl-L-methionine = 2'-O-methylcytidine(2498) in 23S rRNA + S-adenosyl-L-homocysteine + H(+). Functionally, catalyzes the 2'-O-methylation at nucleotide C2498 in 23S rRNA. The protein is Ribosomal RNA large subunit methyltransferase M of Cronobacter sakazakii (strain ATCC BAA-894) (Enterobacter sakazakii).